The primary structure comprises 652 residues: Beta-mannosyltransferase 1 (652 aa).

The Cytoplasmic portion of the chain corresponds to 1-15 (MVDLFQWLKFYSMRR). Residues 16–34 (LGQVAITLVLLNLFVFLGY) traverse the membrane as a helical segment. Over 35 to 652 (KFTPSTVIGS…LYQLQEEERS (618 aa)) the chain is Extracellular. Asn57 carries N-linked (GlcNAc...) asparagine glycosylation. The stretch at 535–652 (PARYAKQMEN…LYQLQEEERS (118 aa)) forms a coiled coil. Positions 536–621 (ARYAKQMENE…EAKENEAKKK (86 aa)) are disordered.

It belongs to the BMT family.

It localises to the membrane. Its function is as follows. Beta-mannosyltransferase involved in cell wall biosynthesis. Involved in the beta-mannosylation of outer chains of N-glycans. The sequence is that of Beta-mannosyltransferase 1 (BMT1) from Komagataella phaffii (strain ATCC 76273 / CBS 7435 / CECT 11047 / NRRL Y-11430 / Wegner 21-1) (Yeast).